A 228-amino-acid polypeptide reads, in one-letter code: Phosphoribosylformylglycinamidine synthase subunit PurQ (228 aa).

The region spanning 3–226 (FAVVVFPGSN…VTYWRDAHVV (224 aa)) is the Glutamine amidotransferase type-1 domain. The Nucleophile role is filled by Cys-86. Active-site residues include His-195 and Glu-197.

Part of the FGAM synthase complex composed of 1 PurL, 1 PurQ and 2 PurS subunits.

The protein localises to the cytoplasm. It carries out the reaction N(2)-formyl-N(1)-(5-phospho-beta-D-ribosyl)glycinamide + L-glutamine + ATP + H2O = 2-formamido-N(1)-(5-O-phospho-beta-D-ribosyl)acetamidine + L-glutamate + ADP + phosphate + H(+). The enzyme catalyses L-glutamine + H2O = L-glutamate + NH4(+). Its pathway is purine metabolism; IMP biosynthesis via de novo pathway; 5-amino-1-(5-phospho-D-ribosyl)imidazole from N(2)-formyl-N(1)-(5-phospho-D-ribosyl)glycinamide: step 1/2. Part of the phosphoribosylformylglycinamidine synthase complex involved in the purines biosynthetic pathway. Catalyzes the ATP-dependent conversion of formylglycinamide ribonucleotide (FGAR) and glutamine to yield formylglycinamidine ribonucleotide (FGAM) and glutamate. The FGAM synthase complex is composed of three subunits. PurQ produces an ammonia molecule by converting glutamine to glutamate. PurL transfers the ammonia molecule to FGAR to form FGAM in an ATP-dependent manner. PurS interacts with PurQ and PurL and is thought to assist in the transfer of the ammonia molecule from PurQ to PurL. The chain is Phosphoribosylformylglycinamidine synthase subunit PurQ from Anoxybacillus flavithermus (strain DSM 21510 / WK1).